The primary structure comprises 138 residues: ATP synthase epsilon chain (138 aa).

This sequence belongs to the ATPase epsilon chain family. F-type ATPases have 2 components, CF(1) - the catalytic core - and CF(0) - the membrane proton channel. CF(1) has five subunits: alpha(3), beta(3), gamma(1), delta(1), epsilon(1). CF(0) has three main subunits: a, b and c.

It localises to the cellular thylakoid membrane. Produces ATP from ADP in the presence of a proton gradient across the membrane. This is ATP synthase epsilon chain (atpC) from Synechococcus sp. (strain PCC 6716).